A 212-amino-acid polypeptide reads, in one-letter code: uncharacterized protein (212 aa).

The helical transmembrane segment at 186-206 (VITLISFMLFSILFFLIFLIV) threads the bilayer.

The protein resides in the membrane. This is an uncharacterized protein from Mycoplasma genitalium (strain ATCC 33530 / DSM 19775 / NCTC 10195 / G37) (Mycoplasmoides genitalium).